The sequence spans 402 residues: Speedy protein E2B (402 aa).

Residues 1 to 89 (MDRTETRFRK…EEPEKELAPE (89 aa)) are disordered. Polar residues predominate over residues 16 to 39 (GKITTSRQPHPQNEQSPQRSTSGY). Residues 76-89 (DESEEEPEKELAPE) show a composition bias toward acidic residues.

Belongs to the Speedy/Ringo family.

The sequence is that of Speedy protein E2B (SPDYE2B) from Homo sapiens (Human).